A 610-amino-acid polypeptide reads, in one-letter code: Butyryl-CoA dehydrogenase Swol_1933 (610 aa).

The active-site Proton acceptor is the E451.

This sequence belongs to the acyl-CoA dehydrogenase family. The cofactor is FAD.

Its subcellular location is the cytoplasm. The enzyme catalyses butanoyl-CoA + oxidized [electron-transfer flavoprotein] + H(+) = (2E)-butenoyl-CoA + reduced [electron-transfer flavoprotein]. It carries out the reaction a short-chain 2,3-saturated fatty acyl-CoA + oxidized [electron-transfer flavoprotein] + H(+) = a short-chain (2E)-enoyl-CoA + reduced [electron-transfer flavoprotein]. Its pathway is lipid metabolism; butanoate metabolism. Its function is as follows. Involved in syntrophic growth of S.wolfei with butyrate, as part of the butyrate oxidation pathway. Catalyzes the oxidation of butanoyl-CoA to crotonyl-CoA. Probably passes the electrons released by this reaction on to electron-transfer flavoproteins (EtfAB) to finally generate hydrogen and/or formate. This chain is Butyryl-CoA dehydrogenase Swol_1933, found in Syntrophomonas wolfei subsp. wolfei (strain DSM 2245B / Goettingen).